Reading from the N-terminus, the 294-residue chain is 4-hydroxy-tetrahydrodipicolinate synthase (294 aa).

Thr47 is a binding site for pyruvate. Tyr135 serves as the catalytic Proton donor/acceptor. Lys163 serves as the catalytic Schiff-base intermediate with substrate. Position 205 (Ile205) interacts with pyruvate.

The protein belongs to the DapA family. As to quaternary structure, homotetramer; dimer of dimers.

The protein resides in the cytoplasm. The enzyme catalyses L-aspartate 4-semialdehyde + pyruvate = (2S,4S)-4-hydroxy-2,3,4,5-tetrahydrodipicolinate + H2O + H(+). It participates in amino-acid biosynthesis; L-lysine biosynthesis via DAP pathway; (S)-tetrahydrodipicolinate from L-aspartate: step 3/4. Functionally, catalyzes the condensation of (S)-aspartate-beta-semialdehyde [(S)-ASA] and pyruvate to 4-hydroxy-tetrahydrodipicolinate (HTPA). The polypeptide is 4-hydroxy-tetrahydrodipicolinate synthase (Rickettsia typhi (strain ATCC VR-144 / Wilmington)).